The primary structure comprises 106 residues: Trp operon repressor homolog (106 aa).

The DNA-binding element occupies 59–82; sequence QREIQQILNTSAATITRGSNMIKI.

Belongs to the TrpR family. In terms of assembly, homodimer.

Its subcellular location is the cytoplasm. Its function is as follows. This protein is an aporepressor. When complexed with L-tryptophan it binds the operator region of the trp operon and prevents the initiation of transcription. This is Trp operon repressor homolog from Histophilus somni (strain 129Pt) (Haemophilus somnus).